The primary structure comprises 362 residues: Transcription factor bHLH128 (362 aa).

The span at 1 to 16 (MYQSSSSTSSSSQRSS) shows a compositional bias: low complexity. 4 disordered regions span residues 1–23 (MYQS…GGGL), 78–106 (SDST…SNKD), 120–140 (SQQH…YSLA), and 162–184 (LNQP…HSRL). A compositionally biased stretch (polar residues) spans 78–96 (SDSTTCGVNNSSDGQKQLG). Positions 162–173 (LNQPTSDYSPQG) are enriched in polar residues. Ser-189 is modified (phosphoserine). Residues 289-339 (CATHPRSIAERERRTRISGKLKKLQDLVPNMDKQTSYSDMLDLAVQHIKGL) enclose the bHLH domain.

In terms of assembly, homodimer.

It is found in the nucleus. The protein is Transcription factor bHLH128 (BHLH128) of Arabidopsis thaliana (Mouse-ear cress).